The sequence spans 320 residues: Probable protein adenylyltransferase aq_aa38 (320 aa).

The Fido domain maps to 76 to 206 (VSEALILWIY…AIVVVEKLSR (131 aa)). Residues 100–101 (KS), 157–159 (GNG), and arginine 163 contribute to the ATP site.

This sequence belongs to the fic family.

The enzyme catalyses L-tyrosyl-[protein] + ATP = O-(5'-adenylyl)-L-tyrosyl-[protein] + diphosphate. It catalyses the reaction L-threonyl-[protein] + ATP = 3-O-(5'-adenylyl)-L-threonyl-[protein] + diphosphate. In terms of biological role, probable adenylyltransferase that mediates the addition of adenosine 5'-monophosphate (AMP) to specific residues of target proteins. This chain is Probable protein adenylyltransferase aq_aa38, found in Aquifex aeolicus (strain VF5).